The chain runs to 291 residues: Acetyl-coenzyme A carboxylase carboxyl transferase subunit beta (291 aa).

Residues 1–23 form a disordered region; it reads MSWLSKLMPSGIRTDNTPSKKRS. A CoA carboxyltransferase N-terminal domain is found at 28 to 291; sequence LWEKCSNCGS…LGRQPAPEVA (264 aa). Zn(2+) is bound by residues Cys-32, Cys-35, Cys-51, and Cys-54. Residues 32–54 form a C4-type zinc finger; sequence CSNCGSALYRPELEENLEVCPKC.

This sequence belongs to the AccD/PCCB family. As to quaternary structure, acetyl-CoA carboxylase is a heterohexamer composed of biotin carboxyl carrier protein (AccB), biotin carboxylase (AccC) and two subunits each of ACCase subunit alpha (AccA) and ACCase subunit beta (AccD). Requires Zn(2+) as cofactor.

The protein localises to the cytoplasm. It catalyses the reaction N(6)-carboxybiotinyl-L-lysyl-[protein] + acetyl-CoA = N(6)-biotinyl-L-lysyl-[protein] + malonyl-CoA. The protein operates within lipid metabolism; malonyl-CoA biosynthesis; malonyl-CoA from acetyl-CoA: step 1/1. Its function is as follows. Component of the acetyl coenzyme A carboxylase (ACC) complex. Biotin carboxylase (BC) catalyzes the carboxylation of biotin on its carrier protein (BCCP) and then the CO(2) group is transferred by the transcarboxylase to acetyl-CoA to form malonyl-CoA. The sequence is that of Acetyl-coenzyme A carboxylase carboxyl transferase subunit beta from Stenotrophomonas maltophilia (strain K279a).